The chain runs to 263 residues: Interleukin-33 (263 aa).

Residues 1 to 17 show a composition bias toward polar residues; sequence MKYSTTKIPPAKMNSSA. The segment at 1-28 is disordered; the sequence is MKYSTTKIPPAKMNSSADKALVKSPKLR. The homeodomain-like HTH domain stretch occupies residues 1–65; sequence MKYSTTKIPP…CYFRKEITKR (65 aa). The interaction with RELA stretch occupies residues 62–103; it reads ITKRYSPRTAEKCRKQCLVFTACHQQLNKDFTSDVPMLQKCF.

This sequence belongs to the IL-1 family. Highly divergent. As to quaternary structure, forms a 1:1:1 heterotrimeric complex with its primary high-affinity receptor IL1RL1 and the coreceptor IL1RAP. Interacts with cargo receptor TMED10; the interaction mediates the translocation from the cytoplasm into the ERGIC (endoplasmic reticulum-Golgi intermediate compartment) and thereby secretion. The full-length protein can be released from cells and is able to signal via the IL1RL1/ST2 receptor. However, proteolytic processing by CELA1, CSTG/cathepsin G and ELANE/neutrophil elastase produces C-terminal peptides that are more active than the unprocessed full-length protein. May also be proteolytically processed by calpains. Proteolytic cleavage mediated by apoptotic caspases including CASP3 and CASP7 results in IL33 inactivation. In vitro proteolytic cleavage by CASP1 was reported but could not be confirmed in vivo suggesting that IL33 is probably not a direct substrate for that caspase. As to expression, expressed in cultured umbilical artery smooth muscle cells after stimulation with IL1A and IL1B, and to a lesser extent with IFNG. Expressed in vasospastic cerebral arteries after subarachnoid hemorrhage.

The protein localises to the nucleus. It localises to the chromosome. It is found in the cytoplasm. Its subcellular location is the cytoplasmic vesicle. The protein resides in the secretory vesicle. The protein localises to the secreted. Cytokine that binds to and signals through the IL1RL1/ST2 receptor which in turn activates NF-kappa-B and MAPK signaling pathways in target cells. Involved in the maturation of Th2 cells inducing the secretion of T-helper type 2-associated cytokines. Also involved in activation of mast cells, basophils, eosinophils and natural killer cells. Acts as a chemoattractant for Th2 cells, and may function as an 'alarmin', that amplifies immune responses during tissue injury. Induces rapid UCP2-dependent mitochondrial rewiring that attenuates the generation of reactive oxygen species and preserves the integrity of Krebs cycle required for persistent production of itaconate and subsequent GATA3-dependent differentiation of inflammation-resolving alternatively activated macrophages. Its function is as follows. In quiescent endothelia the uncleaved form is constitutively and abundantly expressed, and acts as a chromatin-associated nuclear factor with transcriptional repressor properties, it may sequester nuclear NF-kappaB/RELA, lowering expression of its targets. This form is rapidely lost upon angiogenic or pro-inflammatory activation. The protein is Interleukin-33 (IL33) of Canis lupus familiaris (Dog).